Reading from the N-terminus, the 373-residue chain is P2Y purinoceptor 2 (373 aa).

Over 1–32 the chain is Extracellular; that stretch reads MAADLEPWNSTINGTWEGDELGYKCRFNEDFK. 2 N-linked (GlcNAc...) asparagine glycosylation sites follow: N9 and N13. Residues 33-59 form a helical membrane-spanning segment; the sequence is YVLLPVSYGVVCVLGLCLNVVALYIFL. At 60 to 70 the chain is on the cytoplasmic side; that stretch reads CRLKTWNASTT. Residues 71–93 form a helical membrane-spanning segment; that stretch reads YMFHLAVSDSLYAASLPLLVYYY. The Extracellular segment spans residues 94–110; it reads ARGDHWPFSTVLCKLVR. A disulfide bridge links C106 with C183. A helical transmembrane segment spans residues 111-129; sequence FLFYTNLYCSILFLTCISV. Topologically, residues 130–152 are cytoplasmic; that stretch reads HRCLGVLRPLHSLRWGRARYARR. The helical transmembrane segment at 153–172 threads the bilayer; sequence VAAVVWVLVLACQAPVLYFV. Over 173-194 the chain is Extracellular; sequence TTSVRGTRITCHDTSARELFSH. A helical membrane pass occupies residues 195–220; the sequence is FVAYSSVMLGLLFAVPFSVILVCYVL. The Cytoplasmic segment spans residues 221–246; sequence MARRLLKPAYGTTGGLPRAKRKSVRT. Residues 247–269 form a helical membrane-spanning segment; it reads IALVLAVFALCFLPFHVTRTLYY. Residues 270–287 are Extracellular-facing; it reads SFRSLDLSCHTLNAINMA. A helical membrane pass occupies residues 288 to 309; the sequence is YKITRPLASANSCLDPVLYFLA. The Cytoplasmic segment spans residues 310–373; sequence GQRLVRFARD…AGSETKDIRL (64 aa). The interval 318-373 is disordered; the sequence is RDAKPPTEPTPSPQARRKLGLHRPNRTVRKDLSVSSDDSRRTESTPAGSETKDIRL. The span at 332-344 shows a compositional bias: basic residues; the sequence is ARRKLGLHRPNRT. Residues 345–360 are compositionally biased toward basic and acidic residues; the sequence is VRKDLSVSSDDSRRTE.

This sequence belongs to the G-protein coupled receptor 1 family. As to expression, spleen, testis, kidney, liver, lung, heart and brain.

It is found in the cell membrane. In terms of biological role, receptor for ATP and UTP coupled to G-proteins that activate a phosphatidylinositol-calcium second messenger system. The affinity range is UTP = ATP &gt; ATP-gamma-S &gt;&gt; 2-methylthio-ATP = ADP. In Mus musculus (Mouse), this protein is P2Y purinoceptor 2 (P2ry2).